A 934-amino-acid chain; its full sequence is 2-oxoglutarate dehydrogenase E1 component (934 aa).

Belongs to the alpha-ketoglutarate dehydrogenase family. In terms of assembly, homodimer. Part of the 2-oxoglutarate dehydrogenase (OGDH) complex composed of E1 (2-oxoglutarate dehydrogenase), E2 (dihydrolipoamide succinyltransferase) and E3 (dihydrolipoamide dehydrogenase); the complex contains multiple copies of the three enzymatic components (E1, E2 and E3). The cofactor is thiamine diphosphate.

The enzyme catalyses N(6)-[(R)-lipoyl]-L-lysyl-[protein] + 2-oxoglutarate + H(+) = N(6)-[(R)-S(8)-succinyldihydrolipoyl]-L-lysyl-[protein] + CO2. In terms of biological role, E1 component of the 2-oxoglutarate dehydrogenase (OGDH) complex which catalyzes the decarboxylation of 2-oxoglutarate, the first step in the conversion of 2-oxoglutarate to succinyl-CoA and CO(2). The sequence is that of 2-oxoglutarate dehydrogenase E1 component (sucA) from Coxiella burnetii (strain RSA 493 / Nine Mile phase I).